Here is a 459-residue protein sequence, read N- to C-terminus: Hepatocyte nuclear factor 3-beta (459 aa).

The transactivation domain 1 stretch occupies residues 14-93; sequence DWSSYYAEPE…AGAMAGMSGS (80 aa). The short motif at 106-113 is the Nuclear localization signal element; it reads LSPSLSPL. Thr-156 is modified (phosphothreonine). Positions 159–252 form a DNA-binding region, fork-head; the sequence is KPPYSYISLI…FENGCYLRRQ (94 aa). Ser-212 carries the post-translational modification Phosphoserine. Low complexity predominate over residues 268–281; it reads GAASSGGKKTAPGS. The tract at residues 268 to 366 is disordered; that stretch reads GAASSGGKKT…PGLPPEAHLK (99 aa). Ser-284 is subject to Phosphoserine. Residues 295–311 are compositionally biased toward polar residues; it reads ASETPAGTESPHSSASP. Thr-302 is subject to Phosphothreonine. Residues Ser-304, Ser-307, Ser-308, and Ser-310 each carry the phosphoserine modification. The segment covering 340–353 has biased composition (low complexity); sequence PGQQQQAAAHLLGP. The transactivation domain 2 stretch occupies residues 362–459; that stretch reads EAHLKPEHHY…VYSRPIMNSS (98 aa). Ser-438 and Ser-459 each carry phosphoserine.

In terms of assembly, binds DNA as a monomer. Binds TLE1. Interacts with FOXA1 and FOXA3. Interacts with PRKDC. Interacts with AKT1. Interacts with TET1; this interaction may recruit TET1 to specific genomic loci to mediate their demethylation. In terms of processing, phosphorylation on Thr-156 abolishes binding to target promoters and subsequent transcription activation upon insulin stimulation. Restricted mainly to endoderm-derived tissues (lung, liver, stomach, and small intestine). Expressed in epididymis with region-specific expression pattern: no expression is observed in initial segment, low expression in proximal caput, gradiently higher levels of expression in middle and distal caput and highest level in corpus and cauda (at protein level).

It is found in the nucleus. The protein resides in the cytoplasm. In terms of biological role, transcription factor that is involved in embryonic development, establishment of tissue-specific gene expression and regulation of gene expression in differentiated tissues. Is thought to act as a 'pioneer' factor opening the compacted chromatin for other proteins through interactions with nucleosomal core histones and thereby replacing linker histones at target enhancer and/or promoter sites. Binds DNA with the consensus sequence 5'-[AC]A[AT]T[AG]TT[GT][AG][CT]T[CT]-3'. In embryonic development is required for notochord formation. Involved in the development of multiple endoderm-derived organ systems such as the liver, pancreas and lungs; Foxa1 and Foxa2 seem to have at least in part redundant roles. FOXA1 and FOXA2 are essential for hepatic specification. FOXA1 and FOXA2 are required for morphogenesis and cell differentiation during formation of the lung. FOXA1 and FOXA2 are involved in bile duct formation; they positively regulate the binding glucocorticoid receptor/NR3C1 to the IL6 promoter. FOXA1 and FOXA2 regulate multiple phases of midbrain dopaminergic neuron development; they regulate expression of NEUROG2 at the beginning of mDA neurogenesis and of NR4A2 and EN1 in immature mDA neurons. Modulates the transcriptional activity of nuclear hormone receptors; inhibits AR-mediated transcription from the LCN5 promoter. Binds to fibrinogen beta promoter and is involved in IL6-induced fibrinogen beta transcriptional activation. Originally described as a transcription activator for a number of liver genes such as AFP, albumin, tyrosine aminotransferase, PEPCK, etc. Interacts with the cis-acting regulatory regions of these genes. Involved in glucose homeostasis; regulates the expression of genes important for glucose sensing in pancreatic beta-cells and glucose homeostasis. In pancreatic beta cells activates transcription of potassium channel subunits KCNJ11 and ABCC8. Involved in regulation of fat metabolism; activates transcriptional programs of lipid metabolism and ketogenesis at low insulin state. Involved in transcriptional regulation of MUC2 in the intestine. The protein is Hepatocyte nuclear factor 3-beta (Foxa2) of Mus musculus (Mouse).